A 276-amino-acid chain; its full sequence is NAD kinase (276 aa).

Asp-61 acts as the Proton acceptor in catalysis. NAD(+) is bound by residues 61–62, Arg-66, 135–136, Arg-146, His-163, Asp-165, and Ala-200; these read DG and NE.

It belongs to the NAD kinase family. Requires a divalent metal cation as cofactor.

Its subcellular location is the cytoplasm. The enzyme catalyses NAD(+) + ATP = ADP + NADP(+) + H(+). Functionally, involved in the regulation of the intracellular balance of NAD and NADP, and is a key enzyme in the biosynthesis of NADP. Catalyzes specifically the phosphorylation on 2'-hydroxyl of the adenosine moiety of NAD to yield NADP. The polypeptide is NAD kinase (Chloroflexus aurantiacus (strain ATCC 29366 / DSM 635 / J-10-fl)).